A 92-amino-acid chain; its full sequence is DNA-directed RNA polymerase subunit omega (92 aa).

This sequence belongs to the RNA polymerase subunit omega family. As to quaternary structure, the RNAP catalytic core consists of 2 alpha, 1 beta, 1 beta' and 1 omega subunit. When a sigma factor is associated with the core the holoenzyme is formed, which can initiate transcription.

It catalyses the reaction RNA(n) + a ribonucleoside 5'-triphosphate = RNA(n+1) + diphosphate. In terms of biological role, promotes RNA polymerase assembly. Latches the N- and C-terminal regions of the beta' subunit thereby facilitating its interaction with the beta and alpha subunits. The polypeptide is DNA-directed RNA polymerase subunit omega (Shewanella frigidimarina (strain NCIMB 400)).